Here is a 934-residue protein sequence, read N- to C-terminus: 2-oxoglutarate dehydrogenase E1 component (934 aa).

This sequence belongs to the alpha-ketoglutarate dehydrogenase family. Homodimer. Part of the 2-oxoglutarate dehydrogenase (OGDH) complex composed of E1 (2-oxoglutarate dehydrogenase), E2 (dihydrolipoamide succinyltransferase) and E3 (dihydrolipoamide dehydrogenase); the complex contains multiple copies of the three enzymatic components (E1, E2 and E3). Thiamine diphosphate is required as a cofactor.

The catalysed reaction is N(6)-[(R)-lipoyl]-L-lysyl-[protein] + 2-oxoglutarate + H(+) = N(6)-[(R)-S(8)-succinyldihydrolipoyl]-L-lysyl-[protein] + CO2. In terms of biological role, E1 component of the 2-oxoglutarate dehydrogenase (OGDH) complex which catalyzes the decarboxylation of 2-oxoglutarate, the first step in the conversion of 2-oxoglutarate to succinyl-CoA and CO(2). The chain is 2-oxoglutarate dehydrogenase E1 component from Staphylococcus epidermidis (strain ATCC 35984 / DSM 28319 / BCRC 17069 / CCUG 31568 / BM 3577 / RP62A).